Reading from the N-terminus, the 389-residue chain is Na(+)/H(+) antiporter NhaA (389 aa).

Transmembrane regions (helical) follow at residues Ala-14–Leu-34, Leu-59–Val-79, Ser-95–Phe-115, Ala-124–Leu-144, Val-154–Phe-174, Thr-177–Leu-197, Leu-213–Ile-233, Pro-257–Gly-277, Ile-292–Val-312, Ile-328–Leu-348, and Leu-363–Val-383.

It belongs to the NhaA Na(+)/H(+) (TC 2.A.33) antiporter family.

The protein resides in the cell inner membrane. It catalyses the reaction Na(+)(in) + 2 H(+)(out) = Na(+)(out) + 2 H(+)(in). In terms of biological role, na(+)/H(+) antiporter that extrudes sodium in exchange for external protons. In Shewanella baltica (strain OS195), this protein is Na(+)/H(+) antiporter NhaA.